Here is a 100-residue protein sequence, read N- to C-terminus: uncharacterized protein (100 aa).

This is an uncharacterized protein from Lactuca sativa (Garden lettuce).